A 93-amino-acid chain; its full sequence is Large ribosomal subunit protein uL23cz/uL23cy (93 aa).

This sequence belongs to the universal ribosomal protein uL23 family. As to quaternary structure, part of the 50S ribosomal subunit.

The protein localises to the plastid. It localises to the chloroplast. Its function is as follows. Binds to 23S rRNA. The polypeptide is Large ribosomal subunit protein uL23cz/uL23cy (rpl23-A) (Drimys granadensis).